The following is a 1044-amino-acid chain: Isoleucine--tRNA ligase (1044 aa).

Positions 48–58 (PFATGLPHFGH) match the 'HIGH' region motif. A 'KMSKS' region motif is present at residues 594–598 (KMSKS). Position 597 (K597) interacts with ATP.

It belongs to the class-I aminoacyl-tRNA synthetase family. IleS type 2 subfamily. In terms of assembly, monomer. The cofactor is Zn(2+).

The protein resides in the cytoplasm. It catalyses the reaction tRNA(Ile) + L-isoleucine + ATP = L-isoleucyl-tRNA(Ile) + AMP + diphosphate. Catalyzes the attachment of isoleucine to tRNA(Ile). As IleRS can inadvertently accommodate and process structurally similar amino acids such as valine, to avoid such errors it has two additional distinct tRNA(Ile)-dependent editing activities. One activity is designated as 'pretransfer' editing and involves the hydrolysis of activated Val-AMP. The other activity is designated 'posttransfer' editing and involves deacylation of mischarged Val-tRNA(Ile). This is Isoleucine--tRNA ligase from Borrelia recurrentis (strain A1).